The following is a 509-amino-acid chain: Cytochrome P450 monooxygenase alt3 (509 aa).

Residues 25-45 (IITGIIVLPVLYVLLKVIYNL) form a helical membrane-spanning segment. Heme is bound at residue C450.

This sequence belongs to the cytochrome P450 family. It depends on heme as a cofactor.

It is found in the membrane. Its pathway is secondary metabolite biosynthesis. In terms of biological role, cytochrome P450 monooxygenase; part of the gene cluster that mediates the biosynthesis of alternapyrone derivatives. Alternapyrone is a decaketide with octa-methylation from methionine on every C2 unit except the third unit. All the domains in the polyketide synthase alt5 are apparently involved in alternapyrone synthesis, that is, the 8 CMeT, 7 KR, 7 DH, and 4 ER reactions in the 9 KS-mediated condensation steps required for alternapyrone synthesis. the alternapyrone produced by alt5 might be intensively modified by cytochrome P450 monooxygenases alt1, alt2 and alt3 and FAD-dependent oxidoreductase alt4 present in the alt gene cluster. The protein is Cytochrome P450 monooxygenase alt3 of Alternaria solani.